A 227-amino-acid chain; its full sequence is tRNA (guanine-N(1)-)-methyltransferase (227 aa).

Residues Gly110 and 129 to 134 (IGDYVL) each bind S-adenosyl-L-methionine.

It belongs to the RNA methyltransferase TrmD family. As to quaternary structure, homodimer.

It is found in the cytoplasm. The enzyme catalyses guanosine(37) in tRNA + S-adenosyl-L-methionine = N(1)-methylguanosine(37) in tRNA + S-adenosyl-L-homocysteine + H(+). Specifically methylates guanosine-37 in various tRNAs. The polypeptide is tRNA (guanine-N(1)-)-methyltransferase (Mycoplasmopsis synoviae (strain 53) (Mycoplasma synoviae)).